The primary structure comprises 147 residues: Large ribosomal subunit protein uL15 (147 aa).

The disordered stretch occupies residues 1-54 (MKLFELQPAPGSKKLPNRKGRGIGSGNGKTGGRGHKGQNARAGGGVRPGFEGGQ). Gly residues-rich tracts occupy residues 22–31 (GIGSGNGKTG) and 42–52 (AGGGVRPGFEG).

The protein belongs to the universal ribosomal protein uL15 family. As to quaternary structure, part of the 50S ribosomal subunit.

In terms of biological role, binds to the 23S rRNA. This is Large ribosomal subunit protein uL15 from Ruminiclostridium cellulolyticum (strain ATCC 35319 / DSM 5812 / JCM 6584 / H10) (Clostridium cellulolyticum).